A 134-amino-acid polypeptide reads, in one-letter code: ATP synthase epsilon chain (134 aa).

The protein belongs to the ATPase epsilon chain family. F-type ATPases have 2 components, CF(1) - the catalytic core - and CF(0) - the membrane proton channel. CF(1) has five subunits: alpha(3), beta(3), gamma(1), delta(1), epsilon(1). CF(0) has three main subunits: a, b and c.

It localises to the cell inner membrane. Its function is as follows. Produces ATP from ADP in the presence of a proton gradient across the membrane. The sequence is that of ATP synthase epsilon chain from Rhodospirillum rubrum (strain ATCC 11170 / ATH 1.1.1 / DSM 467 / LMG 4362 / NCIMB 8255 / S1).